The primary structure comprises 418 residues: Endoglucanase EG-II (418 aa).

An N-terminal signal peptide occupies residues 1–21 (MNKSVAPLLLAASILYGGAVA). Pyrrolidone carboxylic acid is present on Gln22. The region spanning 22 to 57 (QQTVWGQCGGIGWSGPTNCAPGSACSTLNPYYAQCI) is the CBM1 domain. The linker stretch occupies residues 58–91 (PGATTITTSTRPPSGPTTTTRATSTSSSTPPTSS). Positions 63-91 (ITTSTRPPSGPTTTTRATSTSSSTPPTSS) are disordered. The catalytic stretch occupies residues 92 to 418 (GVRFAGVNIA…SLVSSCLARK (327 aa)). Cys107 and Cys113 are disulfide-bonded. Asn124 is a glycosylation site (N-linked (GlcNAc) asparagine). Cysteines 183 and 190 form a disulfide. Catalysis depends on Glu239, which acts as the Proton donor/acceptor. 2 cysteine pairs are disulfide-bonded: Cys323–Cys359 and Cys364–Cys414. Glu350 serves as the catalytic Nucleophile.

This sequence belongs to the glycosyl hydrolase 5 (cellulase A) family.

The protein localises to the secreted. It catalyses the reaction Endohydrolysis of (1-&gt;4)-beta-D-glucosidic linkages in cellulose, lichenin and cereal beta-D-glucans.. In terms of biological role, endoglucanase (EG) that cleaves the internal beta-1,4-glucosidic bonds in cellulose. The degradation of cellulose involves an interplay between different cellulolytic enzymes. Hydrolysis starts with EGs, which cut internal glycosidic linkages to reduce the polymerization degree of the substrate and creates new chain ends for exocellobiohydrolases (CBHs). The CBH release the disaccharide cellobiose from the non-reducing end of the cellulose polymer chain. Finally, beta-1,4-glucosidases hydrolyze the cellobiose and other short cello-oligosaccharides into glucose units. The polypeptide is Endoglucanase EG-II (egl2) (Hypocrea jecorina (Trichoderma reesei)).